Consider the following 65-residue polypeptide: Subtilisin inhibitor CLSI-I (65 aa).

It belongs to the protease inhibitor I13 (potato type I serine protease inhibitor) family.

Inhibits subtilisin-type microbial serine proteases including proteinase K, subtilisin BPN', subtilisin Carlsberg, subtilisin E, A.oryzae protease and S.griseus alkaline protease. Weakly inhibits pronase E. Does not inhibit trypsin or chymotrypsin. The polypeptide is Subtilisin inhibitor CLSI-I (Canavalia lineata (Beach bean)).